Here is a 558-residue protein sequence, read N- to C-terminus: uncharacterized protein (558 aa).

The segment covering 338 to 354 has biased composition (low complexity); sequence STSTSTSTSTSSSNDLN. Positions 338-380 are disordered; that stretch reads STSTSTSTSTSSSNDLNLDSDSDDSDSDDSDSDSDSDSDSEID. The span at 355–380 shows a compositional bias: acidic residues; sequence LDSDSDDSDSDDSDSDSDSDSDSEID.

It localises to the plastid. This is an uncharacterized protein from Euglena longa (Euglenophycean alga).